Here is a 470-residue protein sequence, read N- to C-terminus: Putative multidrug resistance protein MdtD (470 aa).

The Periplasmic portion of the chain corresponds to 1–11; that stretch reads MTEFPDNTRWQ. A helical transmembrane segment spans residues 12-32; it reads LWIVAFGFFMQSLDTTIVNTA. The Cytoplasmic segment spans residues 33-48; sequence LPSMAKSLGESPLHMH. The helical transmembrane segment at 49-69 threads the bilayer; that stretch reads MVVVSYVLTVAVMLPASGWLA. Residues 70 to 76 lie on the Periplasmic side of the membrane; sequence DKIGVRN. A helical transmembrane segment spans residues 77-97; the sequence is IFFAAIVLFTLGSLFCALSGT. Topologically, residues 98–101 are cytoplasmic; the sequence is LNQL. Residues 102–124 form a helical membrane-spanning segment; that stretch reads VLARVLQGVGGAMMVPVGRLTVM. Residues 125 to 137 are Periplasmic-facing; that stretch reads KIVPRAQYMAAMT. Residues 138–158 traverse the membrane as a helical segment; that stretch reads FVALPGQIGPLLGPALGGVLV. Residues 159–164 are Cytoplasmic-facing; sequence EYASWH. Residues 165 to 185 traverse the membrane as a helical segment; sequence WIFLINIPVGIVGAMATFMLM. The Periplasmic segment spans residues 186-196; it reads PNYTIETRRFD. The helical transmembrane segment at 197 to 217 threads the bilayer; the sequence is LPGFLLLAIGMAVLTLALDGS. At 218–224 the chain is on the cytoplasmic side; that stretch reads KSMGISP. The chain crosses the membrane as a helical span at residues 225 to 245; sequence WTLAGLAAGGAAAILLYLFHA. Topologically, residues 246-262 are periplasmic; that stretch reads KKNSGALFSLRLFRTPT. A helical membrane pass occupies residues 263–283; the sequence is FSLGLLGSFAGRIGSGMLPFM. Over 284-285 the chain is Cytoplasmic; sequence TP. Residues 286 to 306 form a helical membrane-spanning segment; the sequence is VFLQIGLGFSPFHAGLMMIPM. Over 307–341 the chain is Periplasmic; sequence VLGSMGMKRIVVQIVNRFGYRRVLVATTLGLALVS. A helical transmembrane segment spans residues 342 to 362; sequence LLFMSVALLGWYYLLPLVLLL. Residues 363-395 lie on the Cytoplasmic side of the membrane; the sequence is QGMVNSARFSSMNTLTLKDLPDTLASSGNSLLS. The helical transmembrane segment at 396-416 threads the bilayer; sequence MIMQLSMSIGVTIAGMLLGMF. The Periplasmic portion of the chain corresponds to 417–430; it reads GQQHIGIDSSATHH. A helical transmembrane segment spans residues 431–451; it reads VFMYTWLCMAVIIALPAIIFA. The Cytoplasmic segment spans residues 452–470; the sequence is RVPNDTQQNMVISRRKRSL.

Belongs to the major facilitator superfamily. TCR/Tet family.

The protein localises to the cell inner membrane. The chain is Putative multidrug resistance protein MdtD from Salmonella typhi.